The sequence spans 96 residues: Mapk-regulated corepressor-interacting protein 1 (96 aa).

Disordered regions lie at residues methionine 1–isoleucine 28 and alanine 76–serine 96. The PXDLS motif motif lies at proline 79–serine 83. Residues aspartate 81–serine 96 show a composition bias toward basic and acidic residues.

The protein belongs to the MCRIP family.

The protein resides in the nucleus. Its subcellular location is the cytoplasm. The protein localises to the stress granule. In terms of biological role, may play a role in the regulation of the epithelial-mesenchymal transition. The chain is Mapk-regulated corepressor-interacting protein 1 (MCRIP1) from Gallus gallus (Chicken).